The following is a 218-amino-acid chain: uncharacterized protein (218 aa).

Helical transmembrane passes span 9–29, 42–62, 67–87, 107–127, 134–154, 159–179, and 192–212; these read LLVI…VIAM, AIIL…SAAV, IPFL…QLLI, TIVL…AGAS, VVIG…LIHI, IPLL…EMIV, and GTVE…ASIY.

The protein belongs to the TerC family.

It localises to the cell membrane. This is an uncharacterized protein from Bacillus subtilis (strain 168).